The following is a 321-amino-acid chain: GTP 3',8-cyclase (321 aa).

The Radical SAM core domain maps to 5–233 (SFNRVIDYIR…QGSSKIYTLE (229 aa)). Position 14 (Arg-14) interacts with GTP. [4Fe-4S] cluster contacts are provided by Cys-21 and Cys-25. Tyr-27 contacts S-adenosyl-L-methionine. Cys-28 contacts [4Fe-4S] cluster. Arg-64 is a GTP binding site. Gly-68 is a binding site for S-adenosyl-L-methionine. A GTP-binding site is contributed by Ser-95. Ser-119 contributes to the S-adenosyl-L-methionine binding site. Residue Lys-155 participates in GTP binding. Met-189 lines the S-adenosyl-L-methionine pocket. Residues Cys-249 and Cys-252 each coordinate [4Fe-4S] cluster. 254–256 (RIR) contacts GTP. Cys-266 contacts [4Fe-4S] cluster.

The protein belongs to the radical SAM superfamily. MoaA family. Monomer and homodimer. Requires [4Fe-4S] cluster as cofactor.

The enzyme catalyses GTP + AH2 + S-adenosyl-L-methionine = (8S)-3',8-cyclo-7,8-dihydroguanosine 5'-triphosphate + 5'-deoxyadenosine + L-methionine + A + H(+). It functions in the pathway cofactor biosynthesis; molybdopterin biosynthesis. Its function is as follows. Catalyzes the cyclization of GTP to (8S)-3',8-cyclo-7,8-dihydroguanosine 5'-triphosphate. This is GTP 3',8-cyclase from Helicobacter pylori (strain J99 / ATCC 700824) (Campylobacter pylori J99).